A 182-amino-acid polypeptide reads, in one-letter code: D-lyxose ketol-isomerase (182 aa).

Mn(2+)-binding residues include His-74, His-76, Glu-87, and His-142.

The protein belongs to the D-lyxose ketol-isomerase family. As to quaternary structure, homodimer. Mn(2+) serves as cofactor.

The catalysed reaction is D-lyxose = D-xylulose. Functionally, sugar isomerase that catalyzes the reversible isomerization of D-lyxose to D-xylulose. Shows weak activity with D-mannose and L-ribose. This chain is D-lyxose ketol-isomerase, found in Cohnella laeviribosi.